The following is a 199-amino-acid chain: FMN-dependent NADH:quinone oxidoreductase (199 aa).

FMN contacts are provided by residues S10, 16 to 18, and 96 to 99; these read SVS and MYNF.

It belongs to the azoreductase type 1 family. Homodimer. It depends on FMN as a cofactor.

It catalyses the reaction 2 a quinone + NADH + H(+) = 2 a 1,4-benzosemiquinone + NAD(+). It carries out the reaction N,N-dimethyl-1,4-phenylenediamine + anthranilate + 2 NAD(+) = 2-(4-dimethylaminophenyl)diazenylbenzoate + 2 NADH + 2 H(+). Functionally, quinone reductase that provides resistance to thiol-specific stress caused by electrophilic quinones. In terms of biological role, also exhibits azoreductase activity. Catalyzes the reductive cleavage of the azo bond in aromatic azo compounds to the corresponding amines. This is FMN-dependent NADH:quinone oxidoreductase from Azotobacter vinelandii (strain DJ / ATCC BAA-1303).